The sequence spans 150 residues: FAD synthase (150 aa).

ATP is bound by residues 10–11 (VF), 15–18 (HPGH), D97, and Y124.

This sequence belongs to the archaeal FAD synthase family. As to quaternary structure, homodimer. A divalent metal cation serves as cofactor.

It carries out the reaction FMN + ATP + H(+) = FAD + diphosphate. It functions in the pathway cofactor biosynthesis; FAD biosynthesis; FAD from FMN: step 1/1. Functionally, catalyzes the transfer of the AMP portion of ATP to flavin mononucleotide (FMN) to produce flavin adenine dinucleotide (FAD) coenzyme. This Methanopyrus kandleri (strain AV19 / DSM 6324 / JCM 9639 / NBRC 100938) protein is FAD synthase.